The primary structure comprises 324 residues: Holliday junction branch migration complex subunit RuvB (324 aa).

A large ATPase domain (RuvB-L) region spans residues 1–168 (MEDLALRPKT…FGIVEHLEYY (168 aa)). Positions 14, 15, 48, 51, 52, 53, 97, 146, 168, and 205 each coordinate ATP. Position 52 (threonine 52) interacts with Mg(2+). Residues 169–239 (TPEELAQGVM…RALEALAALG (71 aa)) form a small ATPAse domain (RuvB-S) region. The head domain (RuvB-H) stretch occupies residues 242 to 324 (ELGLEKRDRE…PPPVGPLLEP (83 aa)). The DNA site is built by arginine 297 and arginine 302.

This sequence belongs to the RuvB family. In terms of assembly, homohexamer. Forms a complex with RuvA. Electron microscopic images suggest 2 closely interacting RuvA tetramers sandwich the HJ DNA; each tetramer associates with an RuvB hexamer. Forms 2 complexes with Holliday junction (HJ) DNA which probably have 1 and 2 RuvA tetramers per complex (called complex I and complex II). Forms an RuvA(8)-RuvB(12)-Holliday junction (HJ) complex. HJ DNA is sandwiched between 2 RuvA tetramers; dsDNA enters through RuvA and exits via RuvB. An RuvB hexamer assembles on each DNA strand where it exits the tetramer. Each RuvB hexamer is contacted by two RuvA subunits (via domain III) on 2 adjacent RuvB subunits; this complex drives branch migration. In the full resolvosome a probable DNA-RuvA(4)-RuvB(12)-RuvC(2) complex forms which resolves the HJ. Mg(2+) is required as a cofactor.

It is found in the cytoplasm. It carries out the reaction ATP + H2O = ADP + phosphate + H(+). Its activity is regulated as follows. The activity of RuvB is enhanced by E.coli RuvA. The RuvA-RuvB-RuvC complex processes Holliday junction (HJ) DNA during genetic recombination and DNA repair, while the RuvA-RuvB complex plays an important role in the rescue of blocked DNA replication forks via replication fork reversal (RFR). RuvA specifically binds to HJ cruciform DNA, conferring on it an open structure. The RuvB hexamer acts as an ATP-dependent pump, pulling dsDNA into and through the RuvAB complex. RuvB forms 2 homohexamers on either side of HJ DNA bound by 1 or 2 RuvA tetramers; 4 subunits per hexamer contact DNA at a time. Coordinated motions by a converter formed by DNA-disengaged RuvB subunits stimulates ATP hydrolysis and nucleotide exchange. Immobilization of the converter enables RuvB to convert the ATP-contained energy into a lever motion, pulling 2 nucleotides of DNA out of the RuvA tetramer per ATP hydrolyzed, thus driving DNA branch migration. The RuvB motors rotate together with the DNA substrate, which together with the progressing nucleotide cycle form the mechanistic basis for DNA recombination by continuous HJ branch migration. Branch migration allows RuvC to scan DNA until it finds its consensus sequence, where it cleaves and resolves cruciform DNA. Functionally, ruvB is a Mg(2+)-dependent, DNA-dependent ATPase with an equal preference for supercoiled and linear dsDNA; all (d)NTPs tested were efficiently hydrolyzed. Promotes Holliday junction (HJ) dissociation at 60 degrees Celsius in the presence of ATP but not ATP-gamma-S or ADP; (d)ATP, (d)CTP and dTTP also power dissociation in the absence of any RuvA. RuvA stimulates the ATPase of RuvB in the presence of dsDNA and HJ branch migration by RuvB. Excess RuvB stimulates some branch migration in vitro even in the presence of mutant RuvA. The protein is Holliday junction branch migration complex subunit RuvB of Thermus thermophilus (strain ATCC 27634 / DSM 579 / HB8).